A 393-amino-acid chain; its full sequence is NAD(P)H-quinone oxidoreductase subunit H, chloroplastic (393 aa).

The protein belongs to the complex I 49 kDa subunit family. NDH is composed of at least 16 different subunits, 5 of which are encoded in the nucleus.

Its subcellular location is the plastid. It is found in the chloroplast thylakoid membrane. The catalysed reaction is a plastoquinone + NADH + (n+1) H(+)(in) = a plastoquinol + NAD(+) + n H(+)(out). It catalyses the reaction a plastoquinone + NADPH + (n+1) H(+)(in) = a plastoquinol + NADP(+) + n H(+)(out). NDH shuttles electrons from NAD(P)H:plastoquinone, via FMN and iron-sulfur (Fe-S) centers, to quinones in the photosynthetic chain and possibly in a chloroplast respiratory chain. The immediate electron acceptor for the enzyme in this species is believed to be plastoquinone. Couples the redox reaction to proton translocation, and thus conserves the redox energy in a proton gradient. The polypeptide is NAD(P)H-quinone oxidoreductase subunit H, chloroplastic (Olimarabidopsis pumila (Dwarf rocket)).